Here is a 429-residue protein sequence, read N- to C-terminus: Probable M18 family aminopeptidase 2 (429 aa).

Zn(2+) is bound by residues His-82, His-156, and His-401.

Belongs to the peptidase M18 family. Zn(2+) serves as cofactor.

The chain is Probable M18 family aminopeptidase 2 from Pseudomonas entomophila (strain L48).